Reading from the N-terminus, the 338-residue chain is Activator of 90 kDa heat shock protein ATPase homolog 1 (338 aa).

Residue Lys-3 is modified to N6-acetyllysine. Residue Lys-182 forms a Glycyl lysine isopeptide (Lys-Gly) (interchain with G-Cter in SUMO1) linkage. Ser-193 is modified (phosphoserine). A Glycyl lysine isopeptide (Lys-Gly) (interchain with G-Cter in SUMO2) cross-link involves residue Lys-203. Lys-212 carries the post-translational modification N6-acetyllysine. Tyr-223 is subject to Phosphotyrosine; by ABL. At Ser-258 the chain carries Phosphoserine.

Belongs to the AHA1 family. As to quaternary structure, interacts with HSPCA/HSP90. Interacts (phosphorylated on Tyr-223) with HSP90AA1; the interaction activates HSP90AA1 ATPase activity. Interacts with HSP90AB1. Interacts with GCH1. Interacts with SRPK1. Interacts with FLCN. (Microbial infection) Interacts with vesicular stomatitis virus glycoprotein (VSV G) (via cytoplasmic tail). Phosphorylation at Tyr-223 enhances binding to chaperone HSP90AA1. Expressed in numerous tissues, including brain, heart, skeletal muscle and kidney and, at lower levels, liver and placenta.

It is found in the cytoplasm. It localises to the cytosol. Its subcellular location is the endoplasmic reticulum. Acts as a co-chaperone of HSP90AA1. Activates the ATPase activity of HSP90AA1 leading to increase in its chaperone activity. Competes with the inhibitory co-chaperone FNIP1 for binding to HSP90AA1, thereby providing a reciprocal regulatory mechanism for chaperoning of client proteins. Competes with the inhibitory co-chaperone TSC1 for binding to HSP90AA1, thereby providing a reciprocal regulatory mechanism for chaperoning of client proteins. The polypeptide is Activator of 90 kDa heat shock protein ATPase homolog 1 (AHSA1) (Homo sapiens (Human)).